A 72-amino-acid polypeptide reads, in one-letter code: Translation initiation factor IF-1 (72 aa).

The S1-like domain maps to 1 to 72; the sequence is MAKEELLEFP…TKGRITYRFK (72 aa).

This sequence belongs to the IF-1 family. As to quaternary structure, component of the 30S ribosomal translation pre-initiation complex which assembles on the 30S ribosome in the order IF-2 and IF-3, IF-1 and N-formylmethionyl-tRNA(fMet); mRNA recruitment can occur at any time during PIC assembly.

It localises to the cytoplasm. One of the essential components for the initiation of protein synthesis. Stabilizes the binding of IF-2 and IF-3 on the 30S subunit to which N-formylmethionyl-tRNA(fMet) subsequently binds. Helps modulate mRNA selection, yielding the 30S pre-initiation complex (PIC). Upon addition of the 50S ribosomal subunit IF-1, IF-2 and IF-3 are released leaving the mature 70S translation initiation complex. This Maricaulis maris (strain MCS10) (Caulobacter maris) protein is Translation initiation factor IF-1.